We begin with the raw amino-acid sequence, 435 residues long: Serine--tRNA ligase (435 aa).

237–239 (TAE) is an L-serine binding site. 268 to 270 (RSE) is a binding site for ATP. Residue Glu291 coordinates L-serine. An ATP-binding site is contributed by 355–358 (EISS). Residue Ser390 coordinates L-serine.

This sequence belongs to the class-II aminoacyl-tRNA synthetase family. Type-1 seryl-tRNA synthetase subfamily. Homodimer. The tRNA molecule binds across the dimer.

The protein localises to the cytoplasm. The enzyme catalyses tRNA(Ser) + L-serine + ATP = L-seryl-tRNA(Ser) + AMP + diphosphate + H(+). The catalysed reaction is tRNA(Sec) + L-serine + ATP = L-seryl-tRNA(Sec) + AMP + diphosphate + H(+). The protein operates within aminoacyl-tRNA biosynthesis; selenocysteinyl-tRNA(Sec) biosynthesis; L-seryl-tRNA(Sec) from L-serine and tRNA(Sec): step 1/1. In terms of biological role, catalyzes the attachment of serine to tRNA(Ser). Is also able to aminoacylate tRNA(Sec) with serine, to form the misacylated tRNA L-seryl-tRNA(Sec), which will be further converted into selenocysteinyl-tRNA(Sec). In Lactobacillus acidophilus (strain ATCC 700396 / NCK56 / N2 / NCFM), this protein is Serine--tRNA ligase.